The following is a 78-amino-acid chain: Large ribosomal subunit protein bL28 (78 aa).

Positions 1–23 are disordered; that stretch reads MSRVCQVSGKRVQTGNNVSHANN. The segment covering 11 to 22 has biased composition (polar residues); the sequence is RVQTGNNVSHAN.

This sequence belongs to the bacterial ribosomal protein bL28 family.

In Stenotrophomonas maltophilia (strain R551-3), this protein is Large ribosomal subunit protein bL28.